A 272-amino-acid chain; its full sequence is Phosphatidylglycerol--prolipoprotein diacylglyceryl transferase (272 aa).

Transmembrane regions (helical) follow at residues 15–35 (LGPL…LVLF), 53–73 (AFAV…WHVV), 90–110 (IWEG…CFFV), and 117–137 (VPPF…LCFA). Arg138 provides a ligand contact to a 1,2-diacyl-sn-glycero-3-phospho-(1'-sn-glycerol). Helical transmembrane passes span 174 to 194 (FHPI…ILLV), 199 to 219 (VFVK…VLYG), and 237 to 257 (FGLD…VLIA).

Belongs to the Lgt family.

Its subcellular location is the cell membrane. The enzyme catalyses L-cysteinyl-[prolipoprotein] + a 1,2-diacyl-sn-glycero-3-phospho-(1'-sn-glycerol) = an S-1,2-diacyl-sn-glyceryl-L-cysteinyl-[prolipoprotein] + sn-glycerol 1-phosphate + H(+). The protein operates within protein modification; lipoprotein biosynthesis (diacylglyceryl transfer). Catalyzes the transfer of the diacylglyceryl group from phosphatidylglycerol to the sulfhydryl group of the N-terminal cysteine of a prolipoprotein, the first step in the formation of mature lipoproteins. In Tropheryma whipplei (strain Twist) (Whipple's bacillus), this protein is Phosphatidylglycerol--prolipoprotein diacylglyceryl transferase.